The chain runs to 89 residues: Large ribosomal subunit protein uL23cz/uL23cy (89 aa).

The protein belongs to the universal ribosomal protein uL23 family. As to quaternary structure, part of the 50S ribosomal subunit.

Its subcellular location is the plastid. It localises to the chloroplast. Its function is as follows. Binds to 23S rRNA. The polypeptide is Large ribosomal subunit protein uL23cz/uL23cy (rpl23-A) (Calycanthus floridus var. glaucus (Eastern sweetshrub)).